Consider the following 216-residue polypeptide: Outer-membrane lipoprotein LolB (216 aa).

A signal peptide spans 1-21; it reads MLIFKICFYRLLPLSVLLLAA. Residue C22 is the site of N-palmitoyl cysteine attachment. C22 is lipidated: S-diacylglycerol cysteine.

It belongs to the LolB family. Monomer.

The protein resides in the cell outer membrane. Its function is as follows. Plays a critical role in the incorporation of lipoproteins in the outer membrane after they are released by the LolA protein. This chain is Outer-membrane lipoprotein LolB, found in Hamiltonella defensa subsp. Acyrthosiphon pisum (strain 5AT).